The chain runs to 400 residues: Putative lysosomal acid lipase/cholesteryl ester hydrolase (400 aa).

The N-terminal stretch at 1–17 is a signal peptide; that stretch reads MWRLIIIAILFQGLVNS. N-linked (GlcNAc...) asparagine glycans are attached at residues asparagine 34, asparagine 129, and asparagine 159. In terms of domain architecture, AB hydrolase-1 spans 78-378; that stretch reads PAVFLQHGLL…EWEHLDFIWG (301 aa). The Charge relay system role is filled by serine 172. An N-linked (GlcNAc...) asparagine glycan is attached at asparagine 271. The Charge relay system role is filled by histidine 372.

This sequence belongs to the AB hydrolase superfamily. Lipase family. As to expression, expressed by the venom gland.

Its subcellular location is the secreted. It catalyses the reaction a sterol ester + H2O = a sterol + a fatty acid + H(+). Functionally, in physiological conditions, is crucial for intracellular hydrolysis of cholesteryl esters and triglycerides that have been internalized via receptor-mediated endocytosis of lipoprotein particles. In venom, the biological contribution is unknown. The chain is Putative lysosomal acid lipase/cholesteryl ester hydrolase from Crotalus adamanteus (Eastern diamondback rattlesnake).